The following is a 200-amino-acid chain: 3-isopropylmalate dehydratase small subunit (200 aa).

The protein belongs to the LeuD family. LeuD type 1 subfamily. As to quaternary structure, heterodimer of LeuC and LeuD.

It carries out the reaction (2R,3S)-3-isopropylmalate = (2S)-2-isopropylmalate. The protein operates within amino-acid biosynthesis; L-leucine biosynthesis; L-leucine from 3-methyl-2-oxobutanoate: step 2/4. Functionally, catalyzes the isomerization between 2-isopropylmalate and 3-isopropylmalate, via the formation of 2-isopropylmaleate. This Yersinia pseudotuberculosis serotype O:1b (strain IP 31758) protein is 3-isopropylmalate dehydratase small subunit.